The sequence spans 466 residues: UDP-N-acetylmuramoylalanine--D-glutamate ligase (466 aa).

121 to 127 (GTNGKST) is an ATP binding site.

It belongs to the MurCDEF family.

The protein resides in the cytoplasm. The enzyme catalyses UDP-N-acetyl-alpha-D-muramoyl-L-alanine + D-glutamate + ATP = UDP-N-acetyl-alpha-D-muramoyl-L-alanyl-D-glutamate + ADP + phosphate + H(+). The protein operates within cell wall biogenesis; peptidoglycan biosynthesis. Cell wall formation. Catalyzes the addition of glutamate to the nucleotide precursor UDP-N-acetylmuramoyl-L-alanine (UMA). The polypeptide is UDP-N-acetylmuramoylalanine--D-glutamate ligase (Rhodopseudomonas palustris (strain HaA2)).